Here is a 523-residue protein sequence, read N- to C-terminus: Alpha,alpha-trehalose-phosphate synthase [UDP-forming] (523 aa).

2 residues coordinate D-glucose 6-phosphate: Tyr-98 and Asp-152. 2 residues coordinate UDP: Arg-288 and Lys-293. 2 residues coordinate UDP-alpha-D-glucose: Arg-288 and Lys-293. Arg-326 serves as a coordination point for D-glucose 6-phosphate. 387 to 395 (DGMNLVSYE) lines the UDP-alpha-D-glucose pocket. Residue 391-395 (LVSYE) participates in UDP binding. A disordered region spans residues 503-523 (QQFNLGEQREEGRLEPGEFDD). The span at 509–523 (EQREEGRLEPGEFDD) shows a compositional bias: basic and acidic residues.

This sequence belongs to the glycosyltransferase 20 family.

It carries out the reaction D-glucose 6-phosphate + UDP-alpha-D-glucose = alpha,alpha-trehalose 6-phosphate + UDP + H(+). It functions in the pathway carbohydrate biosynthesis. Its function is as follows. Synthase catalytic subunit of the trehalose synthase complex that catalyzes the production of trehalose from glucose-6-phosphate and UDP-alpha-D-glucose in a two step process. The disaccharide trehalose serves as a storage carbohydrate that is mobilized during conidial germination. Trehalose also serves as a protectant for cell integrity during stress. This is Alpha,alpha-trehalose-phosphate synthase [UDP-forming] from Botryotinia fuckeliana (strain B05.10) (Noble rot fungus).